Consider the following 109-residue polypeptide: Small ribosomal subunit protein bS6 (109 aa).

The protein belongs to the bacterial ribosomal protein bS6 family.

Functionally, binds together with bS18 to 16S ribosomal RNA. In Ehrlichia canis (strain Jake), this protein is Small ribosomal subunit protein bS6.